Here is a 190-residue protein sequence, read N- to C-terminus: Holliday junction branch migration complex subunit RuvA (190 aa).

Residues 1–65 are domain I; it reads MIGNLSGIVD…ENVAQLYGFI (65 aa). Residues 66–143 are domain II; that stretch reads SKEEQQCLRL…KLEINNNNFH (78 aa). The tract at residues 144-147 is flexible linker; the sequence is PINE. The tract at residues 147–190 is domain III; that stretch reads EDALSALINLGYEKMKAYDTIKKYRPNLDTKDIIRMALKELSIL.

Belongs to the RuvA family. In terms of assembly, homotetramer. Forms an RuvA(8)-RuvB(12)-Holliday junction (HJ) complex. HJ DNA is sandwiched between 2 RuvA tetramers; dsDNA enters through RuvA and exits via RuvB. An RuvB hexamer assembles on each DNA strand where it exits the tetramer. Each RuvB hexamer is contacted by two RuvA subunits (via domain III) on 2 adjacent RuvB subunits; this complex drives branch migration. In the full resolvosome a probable DNA-RuvA(4)-RuvB(12)-RuvC(2) complex forms which resolves the HJ.

The protein resides in the cytoplasm. Functionally, the RuvA-RuvB-RuvC complex processes Holliday junction (HJ) DNA during genetic recombination and DNA repair, while the RuvA-RuvB complex plays an important role in the rescue of blocked DNA replication forks via replication fork reversal (RFR). RuvA specifically binds to HJ cruciform DNA, conferring on it an open structure. The RuvB hexamer acts as an ATP-dependent pump, pulling dsDNA into and through the RuvAB complex. HJ branch migration allows RuvC to scan DNA until it finds its consensus sequence, where it cleaves and resolves the cruciform DNA. The sequence is that of Holliday junction branch migration complex subunit RuvA from Wolbachia pipientis wMel.